Reading from the N-terminus, the 925-residue chain is Protein translocase subunit SecA (925 aa).

ATP contacts are provided by residues glutamine 87, 105 to 109, and aspartate 531; that span reads GEGKT. Residues 867-909 are disordered; that stretch reads AAGADMRFQHSQPESVLHKPEAGEGEEAQPFRRETPKVGRNDP. Residues 895 to 906 are compositionally biased toward basic and acidic residues; sequence QPFRRETPKVGR. Residues cysteine 910, cysteine 912, cysteine 921, and histidine 922 each coordinate Zn(2+).

It belongs to the SecA family. As to quaternary structure, monomer and homodimer. Part of the essential Sec protein translocation apparatus which comprises SecA, SecYEG and auxiliary proteins SecDF-YajC and YidC. Zn(2+) is required as a cofactor.

The protein resides in the cell inner membrane. Its subcellular location is the cytoplasm. It catalyses the reaction ATP + H2O + cellular proteinSide 1 = ADP + phosphate + cellular proteinSide 2.. Functionally, part of the Sec protein translocase complex. Interacts with the SecYEG preprotein conducting channel. Has a central role in coupling the hydrolysis of ATP to the transfer of proteins into and across the cell membrane, serving both as a receptor for the preprotein-SecB complex and as an ATP-driven molecular motor driving the stepwise translocation of polypeptide chains across the membrane. This chain is Protein translocase subunit SecA, found in Thioalkalivibrio sulfidiphilus (strain HL-EbGR7).